Reading from the N-terminus, the 565-residue chain is Periplasmic trehalase (565 aa).

A signal peptide spans 1–30 (MKSPAPSRPQKMALIPACIFLCFAALSVQA). Residues arginine 152, 159–160 (WD), asparagine 196, 205–207 (RSQ), 277–279 (RPE), and glycine 310 contribute to the substrate site. Active-site proton donor/acceptor residues include aspartate 312 and glutamate 496. Substrate is bound at residue glutamate 511. The segment at 539 to 565 (CDNVPATRPLSESTTQPVKQKEAEPTP) is disordered.

The protein belongs to the glycosyl hydrolase 37 family. In terms of assembly, monomer.

The protein localises to the periplasm. It catalyses the reaction alpha,alpha-trehalose + H2O = alpha-D-glucose + beta-D-glucose. Its function is as follows. Provides the cells with the ability to utilize trehalose at high osmolarity by splitting it into glucose molecules that can subsequently be taken up by the phosphotransferase-mediated uptake system. In Escherichia coli O17:K52:H18 (strain UMN026 / ExPEC), this protein is Periplasmic trehalase.